A 163-amino-acid chain; its full sequence is uncharacterized protein (163 aa).

This sequence belongs to the LcrH/SycD chaperone family.

This is an uncharacterized protein from Escherichia coli (strain K12).